A 688-amino-acid polypeptide reads, in one-letter code: PTS system glucoside-specific EIICBA component (688 aa).

A PTS EIIC type-1 domain is found at 3-427; sequence KKLFGQLQRI…FKLKTPGRED (425 aa). Helical transmembrane passes span 12–32, 81–101, 137–157, 182–202, 223–243, 284–304, 315–335, 340–360, 364–384, and 395–415; these read IGKA…LLAF, LGLA…YLIM, LVLG…MGAL, FVPI…SFAW, LTTF…LHHI, AFTT…AFAI, VVGG…ITEP, FLFV…TSFL, LLGV…ILYG, and LVIP…DFAI. The region spanning 438 to 519 is the PTS EIIB type-1 domain; the sequence is AKLPFDVLDA…AKIMSGEITK (82 aa). Catalysis depends on cysteine 460, which acts as the Phosphocysteine intermediate; for EIIB activity. In terms of domain architecture, PTS EIIA type-1 spans 560–664; that stretch reads DQVFAGKMMG…SIVTPMIITN (105 aa). Histidine 612 serves as the catalytic Tele-phosphohistidine intermediate; for EIIA activity.

The protein localises to the cell membrane. Functionally, the phosphoenolpyruvate-dependent sugar phosphotransferase system (sugar PTS), a major carbohydrate active -transport system, catalyzes the phosphorylation of incoming sugar substrates concomitantly with their translocation across the cell membrane. This system is involved in alpha- and beta-glucoside transport. The polypeptide is PTS system glucoside-specific EIICBA component (glcB) (Staphylococcus aureus (strain bovine RF122 / ET3-1)).